The following is a 638-amino-acid chain: tRNA uridine 5-carboxymethylaminomethyl modification enzyme MnmG (638 aa).

Residues 13 to 18 (GGGHAG), Val125, and Ser180 contribute to the FAD site. Residue 273 to 287 (GPRYCPSIEDKIHRF) coordinates NAD(+). Gln370 is an FAD binding site.

It belongs to the MnmG family. In terms of assembly, homodimer. Heterotetramer of two MnmE and two MnmG subunits. FAD serves as cofactor.

It is found in the cytoplasm. In terms of biological role, NAD-binding protein involved in the addition of a carboxymethylaminomethyl (cmnm) group at the wobble position (U34) of certain tRNAs, forming tRNA-cmnm(5)s(2)U34. The polypeptide is tRNA uridine 5-carboxymethylaminomethyl modification enzyme MnmG (Cellvibrio japonicus (strain Ueda107) (Pseudomonas fluorescens subsp. cellulosa)).